Here is a 248-residue protein sequence, read N- to C-terminus: Putative TrmH family tRNA/rRNA methyltransferase (248 aa).

Residues glycine 196, isoleucine 216, and leucine 225 each coordinate S-adenosyl-L-methionine.

It belongs to the class IV-like SAM-binding methyltransferase superfamily. RNA methyltransferase TrmH family.

The polypeptide is Putative TrmH family tRNA/rRNA methyltransferase (Staphylococcus aureus (strain Mu50 / ATCC 700699)).